The primary structure comprises 317 residues: Pantothenate kinase (317 aa).

101–108 (GSVAVGKS) contacts ATP.

The protein belongs to the prokaryotic pantothenate kinase family.

The protein resides in the cytoplasm. The catalysed reaction is (R)-pantothenate + ATP = (R)-4'-phosphopantothenate + ADP + H(+). The protein operates within cofactor biosynthesis; coenzyme A biosynthesis; CoA from (R)-pantothenate: step 1/5. The sequence is that of Pantothenate kinase from Actinobacillus succinogenes (strain ATCC 55618 / DSM 22257 / CCUG 43843 / 130Z).